A 105-amino-acid polypeptide reads, in one-letter code: Small ribosomal subunit protein eS10A (105 aa).

Belongs to the eukaryotic ribosomal protein eS10 family. As to quaternary structure, component of the small ribosomal subunit (SSU). Mature yeast ribosomes consist of a small (40S) and a large (60S) subunit. The 40S small subunit contains 1 molecule of ribosomal RNA (18S rRNA) and 33 different proteins (encoded by 57 genes). The large 60S subunit contains 3 rRNA molecules (25S, 5.8S and 5S rRNA) and 46 different proteins (encoded by 81 genes). eS10 interacts with GCN1 (via middle region); this interaction is direct and promotes GCN2 kinase activity. In terms of processing, the N-terminus is not modified.

The protein resides in the cytoplasm. Its function is as follows. Component of the ribosome, a large ribonucleoprotein complex responsible for the synthesis of proteins in the cell. The small ribosomal subunit (SSU) binds messenger RNAs (mRNAs) and translates the encoded message by selecting cognate aminoacyl-transfer RNA (tRNA) molecules. The large subunit (LSU) contains the ribosomal catalytic site termed the peptidyl transferase center (PTC), which catalyzes the formation of peptide bonds, thereby polymerizing the amino acids delivered by tRNAs into a polypeptide chain. The nascent polypeptides leave the ribosome through a tunnel in the LSU and interact with protein factors that function in enzymatic processing, targeting, and the membrane insertion of nascent chains at the exit of the ribosomal tunnel. eS10 plays a role as a positive regulator of the GCN2 kinase activity by stimulating GCN1-mediated GCN2 activation. This is Small ribosomal subunit protein eS10A from Saccharomyces cerevisiae (strain ATCC 204508 / S288c) (Baker's yeast).